The sequence spans 119 residues: MAFDPASLTFDANGLIPAVAQDHATGEVLMMAWMNAEAVARTVETGCVTYWSRSRQAFWVKGETSGHVQRLIELRIDCDRDCLLLLIEQEGPACHTNRRSCFYTALREGEERIILDPMV.

Asp77 is a Mg(2+) binding site. Cys78 is a Zn(2+) binding site. Residues Asp79 and Asp81 each contribute to the Mg(2+) site. Zn(2+) contacts are provided by Cys94 and Cys101.

Belongs to the PRA-CH family. Homodimer. It depends on Mg(2+) as a cofactor. Zn(2+) serves as cofactor.

It is found in the cytoplasm. It carries out the reaction 1-(5-phospho-beta-D-ribosyl)-5'-AMP + H2O = 1-(5-phospho-beta-D-ribosyl)-5-[(5-phospho-beta-D-ribosylamino)methylideneamino]imidazole-4-carboxamide. Its pathway is amino-acid biosynthesis; L-histidine biosynthesis; L-histidine from 5-phospho-alpha-D-ribose 1-diphosphate: step 3/9. Its function is as follows. Catalyzes the hydrolysis of the adenine ring of phosphoribosyl-AMP. In Cereibacter sphaeroides (strain ATCC 17023 / DSM 158 / JCM 6121 / CCUG 31486 / LMG 2827 / NBRC 12203 / NCIMB 8253 / ATH 2.4.1.) (Rhodobacter sphaeroides), this protein is Phosphoribosyl-AMP cyclohydrolase.